Reading from the N-terminus, the 630-residue chain is Probable potassium transport system protein Kup 1 (630 aa).

12 consecutive transmembrane segments (helical) span residues 15 to 35, 59 to 79, 109 to 129, 145 to 165, 173 to 193, 223 to 243, 255 to 275, 297 to 317, 345 to 365, 374 to 394, 405 to 425, and 427 to 447; these read FAALALAALGVVYGDIGTSPL, LSLIFWALVIVVSVKYVTFIM, WIMIVGVLGAAMFYGDGMVTP, PALKPFVIPLTMVVLFILFFV, VGAFFGPVMLVWFSALALLGV, LVAMGNVVLAVTGAEALYADM, WFAFVLPALVLNYFGQGALIL, LVGLATLATVIASQAVISGAF, IYLPAVNWGLMVAVMILVLGF, AYGIAVTGDMVITSILATVVV, AGLLFACFLSVELVFLAANIL, and IPDGGWFPLVAGMGVFVLMTT.

Belongs to the HAK/KUP transporter (TC 2.A.72) family.

Its subcellular location is the cell inner membrane. The enzyme catalyses K(+)(in) + H(+)(in) = K(+)(out) + H(+)(out). Functionally, transport of potassium into the cell. Likely operates as a K(+):H(+) symporter. The sequence is that of Probable potassium transport system protein Kup 1 from Dechloromonas aromatica (strain RCB).